The following is an 82-amino-acid chain: Small ribosomal subunit protein uS17 (82 aa).

This sequence belongs to the universal ribosomal protein uS17 family. Part of the 30S ribosomal subunit.

Its function is as follows. One of the primary rRNA binding proteins, it binds specifically to the 5'-end of 16S ribosomal RNA. This chain is Small ribosomal subunit protein uS17, found in Phenylobacterium zucineum (strain HLK1).